Consider the following 143-residue polypeptide: Large-conductance mechanosensitive channel (143 aa).

Transmembrane regions (helical) follow at residues 10-30, 40-60, and 86-106; these read FAVKGNVIDLAVGVIIGGAFG, VIMPIVGLVFGRLDFSNLFLV, and GSFITVAVNFLILAFIIFMMV.

It belongs to the MscL family. Homopentamer.

It localises to the cell inner membrane. Channel that opens in response to stretch forces in the membrane lipid bilayer. May participate in the regulation of osmotic pressure changes within the cell. The sequence is that of Large-conductance mechanosensitive channel from Paracidovorax citrulli (strain AAC00-1) (Acidovorax citrulli).